Consider the following 181-residue polypeptide: ATP synthase subunit delta (181 aa).

This sequence belongs to the ATPase delta chain family. As to quaternary structure, F-type ATPases have 2 components, F(1) - the catalytic core - and F(0) - the membrane proton channel. F(1) has five subunits: alpha(3), beta(3), gamma(1), delta(1), epsilon(1). F(0) has three main subunits: a(1), b(2) and c(10-14). The alpha and beta chains form an alternating ring which encloses part of the gamma chain. F(1) is attached to F(0) by a central stalk formed by the gamma and epsilon chains, while a peripheral stalk is formed by the delta and b chains.

The protein resides in the cell membrane. F(1)F(0) ATP synthase produces ATP from ADP in the presence of a proton or sodium gradient. F-type ATPases consist of two structural domains, F(1) containing the extramembraneous catalytic core and F(0) containing the membrane proton channel, linked together by a central stalk and a peripheral stalk. During catalysis, ATP synthesis in the catalytic domain of F(1) is coupled via a rotary mechanism of the central stalk subunits to proton translocation. Functionally, this protein is part of the stalk that links CF(0) to CF(1). It either transmits conformational changes from CF(0) to CF(1) or is implicated in proton conduction. This chain is ATP synthase subunit delta, found in Lactiplantibacillus plantarum (strain ATCC BAA-793 / NCIMB 8826 / WCFS1) (Lactobacillus plantarum).